The sequence spans 120 residues: Large ribosomal subunit protein bL20 (120 aa).

It belongs to the bacterial ribosomal protein bL20 family.

In terms of biological role, binds directly to 23S ribosomal RNA and is necessary for the in vitro assembly process of the 50S ribosomal subunit. It is not involved in the protein synthesizing functions of that subunit. This Cereibacter sphaeroides (strain ATCC 17025 / ATH 2.4.3) (Rhodobacter sphaeroides) protein is Large ribosomal subunit protein bL20.